The following is a 131-amino-acid chain: MALWLTLVIALTCFGGLASPGPVPPHSTALKELIEELVNITQNQKTPLCNGSMVWSVNLTTSMQYCAALESLINISDCSAIQKTQRMLSALCSHKPPSEQVPGKHIRDTKIEVAQFVKDLLKHLRMIFRHG.

The first 18 residues, 1–18 (MALWLTLVIALTCFGGLA), serve as a signal peptide directing secretion. Residues Asn-39, Asn-50, Asn-58, and Asn-74 are each glycosylated (N-linked (GlcNAc...) asparagine). 2 disulfides stabilise this stretch: Cys-49–Cys-78 and Cys-66–Cys-92.

The protein belongs to the IL-4/IL-13 family. As to quaternary structure, interacts with IL13RA2.

Its subcellular location is the secreted. Cytokine that plays important roles in allergic inflammation and immune response to parasite infection. Synergizes with IL2 in regulating interferon-gamma synthesis. Stimulates B-cell proliferation, and activation of eosinophils, basophils, and mast cells. Plays an important role in controlling IL33 activity by modulating the production of transmembrane and soluble forms of interleukin-1 receptor-like 1/IL1RL1. Displays the capacity to antagonize Th1-driven proinflammatory immune response and downregulates synthesis of many proinflammatory cytokines including IL1, IL6, IL10, IL12 and TNF-alpha through a mechanism that partially involves suppression of NF-kappa-B. Also functions on nonhematopoietic cells, including endothelial cells where it induces vascular cell adhesion protein 1/VCAM1, which is important in the recruitment of eosinophils. Exerts its biological effects through its receptors which comprises the IL4R chain and the IL13RA1 chain, to activate JAK1 and TYK2, leading to the activation of STAT6. Aside from IL13RA1, another receptor IL13RA2 acts as a high affinity decoy for IL13 and mediates internalization and depletion of extracellular IL13. The chain is Interleukin-13 (IL13) from Sus scrofa (Pig).